The chain runs to 229 residues: MSSLKKILGLKGKGKKSKKLGIAPPPYEEDTSMEYAPSAPIDKSYFGVDEMDTYDPNQLRYEKFFFTVKMTVRSNRPFRTYSDVAAAVSHWDHMYIGMAGKRPFYKILAFLGSSNLKATPAVLADQGQPEYHTHCEGRAYLPHRMGKTPPMLNVPEHFRRPFNIGLYKGTIELTMTIYDDESLEAAPMIWDHFNSSKFSDFREKALMFGLIVEKKASGAWVLDSISHFK.

Low complexity predominate over residues 1-10 (MSSLKKILGL). Residues 1 to 23 (MSSLKKILGLKGKGKKSKKLGIA) are disordered. Positions 2-4 (SSL) match the dynamin binding motif. Positions 24 to 27 (PPPY) match the PPXY motif motif. A PTAP/PSAP motif motif is present at residues 37–40 (PSAP).

It belongs to the vesiculoviruses matrix protein family. Homomultimer. Interacts with viral nucleocapsid; this interaction contributes to the virion assembly. Interacts with the viral envelope glycoprotein; this interaction contributes to the virion assembly. Interacts with host RAE1-NUP98 complex. Interacts with host NEDD4 and TSG101. Interacts with host dynamin. Interacts with host NDUFAF4; the interaction inhibits viral propagation and is independent of interferon activation. Interacts with host GTF2H5; the interaction may inhibit host transcription. Phosphorylated by host.

It localises to the virion. The protein resides in the host endomembrane system. The protein localises to the host nucleus membrane. Its subcellular location is the host nucleus. It is found in the host cytoplasm. In terms of biological role, forms a double layer around the helical nucleocapsid, the inner matrix layer binding to the N helix and the outer matrix layer binding to the envelope glycoprotein. Plays a major role in assembly and budding of virion, by recruiting cellular partners of the ESCRT complexes that play a key role in releasing the budding particle from the host membrane. Condensates the ribonucleocapsid core during virus assembly. Inhibits the host mRNA nuclear export thereby inducing the shut off of cellular transcription and preventing the interferon signaling and the establishment of antiviral state in infected cells. This shutoff presumably inhibits interferon signaling and thus establishment of antiviral state in virus infected cells. Induces cell-rounding, cytoskeleton disorganization and apoptosis in infected cell. Inhibits host transcription, possibly through interaction with host DNA repair factor IIH/TFIIH GTF2H5 subunit. The polypeptide is Matrix protein (M) (Vesicular stomatitis Indiana virus (strain San Juan) (VSIV)).